The sequence spans 590 residues: Muscarinic acetylcholine receptor M3 (590 aa).

Topologically, residues 1-67 are extracellular; the sequence is MTLHSNSTTS…DPLGGHTVWQ (67 aa). N-linked (GlcNAc...) asparagine glycans are attached at residues asparagine 6, asparagine 15, asparagine 41, and asparagine 48. The helical transmembrane segment at 68–91 threads the bilayer; the sequence is VVFIAFLTGILALVTIIGNILVIV. The Cytoplasmic portion of the chain corresponds to 92-104; it reads SFKVNKQLKTVNN. A helical membrane pass occupies residues 105–130; that stretch reads YFLLSLACADLIIGVISMNLFTTYII. Residues 131–142 lie on the Extracellular side of the membrane; that stretch reads MNRWALGNLACD. Cysteines 141 and 221 form a disulfide. The chain crosses the membrane as a helical span at residues 143 to 164; the sequence is LWLAIDYVASNASVMNLLVISF. The Cytoplasmic segment spans residues 165-184; that stretch reads DRYFSITRPLTYRAKRTTKR. The chain crosses the membrane as a helical span at residues 185–206; it reads AGVMIGLAWVISFVLWAPAILF. The Extracellular segment spans residues 207-229; sequence WQYFVGKRTVPPGECFIQFLSEP. The helical transmembrane segment at 230–252 threads the bilayer; that stretch reads TITFGTAIAAFYMPVTIMTILYW. The Cytoplasmic portion of the chain corresponds to 253–491; the sequence is RIYKETEKRT…SLVKEKKAAQ (239 aa). A Basolateral sorting signal motif is present at residues 275 to 281; sequence AETENFV. The segment at 323 to 357 is disordered; sequence SSEQMDQDHSSSDSWNNNDAAASLENSASSDEEDI. The segment covering 334–345 has biased composition (low complexity); it reads SDSWNNNDAAAS. Serine 385 carries the post-translational modification Phosphoserine. Residues 492 to 514 form a helical membrane-spanning segment; the sequence is TLSAILLAFIITWTPYNIMVLVN. Residues 515–526 are Extracellular-facing; it reads TFCDSCIPKTFW. Cysteines 517 and 520 form a disulfide. A helical transmembrane segment spans residues 527 to 546; it reads NLGYWLCYINSTVNPVCYAL. The Cytoplasmic portion of the chain corresponds to 547-590; sequence CNKTFRTTFKMLLLCQCDKKKRRKQQYQQRQSVIFHKRAPEQAL.

Belongs to the G-protein coupled receptor 1 family. Muscarinic acetylcholine receptor subfamily. CHRM3 sub-subfamily. As to quaternary structure, homodimer; the dimers can form tetramers. Interacts with NALCN. Interacts with TMEM147.

The protein localises to the cell membrane. It is found in the postsynaptic cell membrane. The protein resides in the basolateral cell membrane. It localises to the endoplasmic reticulum membrane. Functionally, the muscarinic acetylcholine receptor mediates various cellular responses, including inhibition of adenylate cyclase, breakdown of phosphoinositides and modulation of potassium channels through the action of G proteins. Primary transducing effect is Pi turnover. This Pongo pygmaeus (Bornean orangutan) protein is Muscarinic acetylcholine receptor M3 (CHRM3).